We begin with the raw amino-acid sequence, 517 residues long: Shugoshin 1 (517 aa).

The stretch at 1 to 89 (MAKERCQKRS…DVILQLRKEC (89 aa)) forms a coiled coil. The necessary for interaction with PPP2CA and PPP2R1A stretch occupies residues 1-176 (MAKERCQKRS…DFDSGKVEST (176 aa)). Disordered regions lie at residues 107–136 (QSEE…LSGK), 149–173 (PYQT…SGKV), 267–317 (PEQI…TLDG), and 334–427 (HPTP…QESP). The stretch at 268–291 (EQIESKHKRARKRRAEQRRTKQRC) forms a coiled coil. Basic residues predominate over residues 273–302 (KHKRARKRRAEQRRTKQRCKSKSSLRSKGN). The segment covering 341 to 363 (KMNNGCNKETDSSNSEVSDLECS) has biased composition (polar residues). Residues 379–390 (RLRDYRESERAV) are compositionally biased toward basic and acidic residues. Ser426 carries the phosphoserine modification. Positions 441-445 (PRVKI) match the PXVXL/I motif motif. The D-box signature appears at 447–455 (KPSLPPKRR). Ser497 is modified (phosphoserine; by NEK2).

This sequence belongs to the shugoshin family. As to quaternary structure, interacts with PPP2CA (or PPP2CB), PPP2R1B, PPP2R5A, PPP2R5B, PPP2R5C, PPP2R5D, PPP2R5E, SET, LRRC59, RBM10 (or RBM5), RPL10A, RPL28, RPL7, RPL7A and RPLP1. Interaction with protein phosphatase 2A occurs most probably through direct binding to the regulatory B56 subunits: PPP2R1B, PPP2R5A, PPP2R5B, PPP2R5C, PPP2R5D, PPP2R5E. Interacts with PPP2R1A and NEK2. Interacts with CDCA8. In terms of processing, ubiquitinated and degraded during mitotic exit by APC/C-Cdh1. Post-translationally, phosphorylation by NEK2 is essential for chromosome congression in mitosis and for the proper attachment of spindle microtubule to the kinetochore. Phosphorylated by PLK1 and AUKRB. As to expression, ubiquitously expressed in proliferating cells. Moderately expressed in the oocytes.

The protein localises to the nucleus. Its subcellular location is the chromosome. The protein resides in the centromere. It is found in the kinetochore. It localises to the cytoplasm. The protein localises to the cytoskeleton. Its subcellular location is the spindle pole. The protein resides in the microtubule organizing center. It is found in the centrosome. It localises to the nucleus speckle. Functionally, plays a central role in chromosome cohesion during mitosis by preventing premature dissociation of cohesin complex from centromeres after prophase, when most of cohesin complex dissociates from chromosomes arms. May act by preventing phosphorylation of the STAG2 subunit of cohesin complex at the centromere, ensuring cohesin persistence at centromere until cohesin cleavage by ESPL1/separase at anaphase. Essential for proper chromosome segregation during mitosis and this function requires interaction with PPP2R1A. Its phosphorylated form is necessary for chromosome congression and for the proper attachment of spindle microtubule to the kinetochore. Necessary for kinetochore localization of PLK1 and CENPF. May play a role in the tension sensing mechanism of the spindle-assembly checkpoint by regulating PLK1 kinetochore affinity. Involved in centromeric enrichment of AUKRB in prometaphase. The sequence is that of Shugoshin 1 from Mus musculus (Mouse).